Reading from the N-terminus, the 358-residue chain is Magnesium-protoporphyrin IX monomethyl ester [oxidative] cyclase 2 (358 aa).

It belongs to the AcsF family. Fe cation is required as a cofactor.

The enzyme catalyses Mg-protoporphyrin IX 13-monomethyl ester + 3 NADPH + 3 O2 + 2 H(+) = 3,8-divinyl protochlorophyllide a + 3 NADP(+) + 5 H2O. It functions in the pathway porphyrin-containing compound metabolism; chlorophyll biosynthesis (light-independent). Functionally, catalyzes the formation of the isocyclic ring in chlorophyll biosynthesis. Mediates the cyclase reaction, which results in the formation of divinylprotochlorophyllide (Pchlide) characteristic of all chlorophylls from magnesium-protoporphyrin IX 13-monomethyl ester (MgPMME). The sequence is that of Magnesium-protoporphyrin IX monomethyl ester [oxidative] cyclase 2 from Synechocystis sp. (strain ATCC 27184 / PCC 6803 / Kazusa).